We begin with the raw amino-acid sequence, 207 residues long: Inner membrane-spanning protein YciB (207 aa).

The next 6 helical transmembrane spans lie at 3-23, 51-71, 78-98, 105-125, 150-170, and 178-198; these read FLFD…AEGQ, VLLA…WLLL, TMLW…VWFH, WKPS…HAVF, FMWI…AYSF, and FKLF…GLYL.

It belongs to the YciB family.

The protein resides in the cell inner membrane. Functionally, plays a role in cell envelope biogenesis, maintenance of cell envelope integrity and membrane homeostasis. The protein is Inner membrane-spanning protein YciB of Methylibium petroleiphilum (strain ATCC BAA-1232 / LMG 22953 / PM1).